The following is a 218-amino-acid chain: NAD(P)H-quinone oxidoreductase subunit I (218 aa).

2 consecutive 4Fe-4S ferredoxin-type domains span residues 55–84 and 95–124; these read GRIH…VDWV and RNYS…MTEE. [4Fe-4S] cluster is bound by residues Cys-64, Cys-67, Cys-70, Cys-74, Cys-104, Cys-107, Cys-110, and Cys-114. A disordered region spans residues 179-218; sequence LRAGKLPSQIIKELQADKSEEEGKNNSSDMVPNKLNSTNK. A compositionally biased stretch (basic and acidic residues) spans 192-202; sequence LQADKSEEEGK. The segment covering 203-218 has biased composition (polar residues); that stretch reads NNSSDMVPNKLNSTNK.

This sequence belongs to the complex I 23 kDa subunit family. As to quaternary structure, NDH-1 is composed of at least 11 different subunits. [4Fe-4S] cluster is required as a cofactor.

It is found in the cellular thylakoid membrane. It catalyses the reaction a plastoquinone + NADH + (n+1) H(+)(in) = a plastoquinol + NAD(+) + n H(+)(out). The catalysed reaction is a plastoquinone + NADPH + (n+1) H(+)(in) = a plastoquinol + NADP(+) + n H(+)(out). In terms of biological role, NDH-1 shuttles electrons from an unknown electron donor, via FMN and iron-sulfur (Fe-S) centers, to quinones in the respiratory and/or the photosynthetic chain. The immediate electron acceptor for the enzyme in this species is believed to be plastoquinone. Couples the redox reaction to proton translocation, and thus conserves the redox energy in a proton gradient. The chain is NAD(P)H-quinone oxidoreductase subunit I from Prochlorococcus marinus (strain NATL2A).